Consider the following 673-residue polypeptide: DNA ligase (673 aa).

Residues 36–40 (DSEYD), 85–86 (SL), and E118 contribute to the NAD(+) site. K120 (N6-AMP-lysine intermediate) is an active-site residue. 4 residues coordinate NAD(+): R141, E178, K295, and K319. Positions 413, 416, 431, and 437 each coordinate Zn(2+). The 78-residue stretch at 596 to 673 (VRDNPLKGKT…SENEFLALLA (78 aa)) folds into the BRCT domain.

This sequence belongs to the NAD-dependent DNA ligase family. LigA subfamily. Requires Mg(2+) as cofactor. Mn(2+) serves as cofactor.

The catalysed reaction is NAD(+) + (deoxyribonucleotide)n-3'-hydroxyl + 5'-phospho-(deoxyribonucleotide)m = (deoxyribonucleotide)n+m + AMP + beta-nicotinamide D-nucleotide.. Its function is as follows. DNA ligase that catalyzes the formation of phosphodiester linkages between 5'-phosphoryl and 3'-hydroxyl groups in double-stranded DNA using NAD as a coenzyme and as the energy source for the reaction. It is essential for DNA replication and repair of damaged DNA. This chain is DNA ligase, found in Histophilus somni (strain 129Pt) (Haemophilus somnus).